We begin with the raw amino-acid sequence, 253 residues long: Sporulation initiation inhibitor protein Soj (253 aa).

The ATP site is built by Lys11, Gly12, Gly13, Val14, Gly15, Lys16, Thr17, Thr18, Pro214, and Asn216. Thr17 contributes to the Mg(2+) binding site.

It belongs to the ParA family. As to quaternary structure, dimerizes in the presence of ATP but not ADP; ATP-binding is required for double-stranded (ds)DNA-binding. Interacts with DnaA.

The protein localises to the cytoplasm. The catalysed reaction is ATP + H2O = ADP + phosphate + H(+). Its function is as follows. Acts as a spatially regulated molecular switch, capable of either inhibiting or activating the ability of DnaA to initiate DNA replication. Monomeric ADP-Soj inhibits oligomerization of DnaA on single-stranded (ss)- or double-stranded (ds)DNA, thus inhibiting DNA replication initiation; does not disassemble premade DnaA-DNA filaments. Decreases the residence time of DnaA on the chromosome at its binding sites (oriC, replication forks and (probably) promoter-binding sites). Soj forms nucleoprotein filaments in an ATP- and DNA-dependent manner. Inhibits the initiation of sporulation, Spo0J antagonizes this inhibition. Soj ultimately inhibits the activation (phosphorylation) of Spo0A. This Bacillus subtilis (strain 168) protein is Sporulation initiation inhibitor protein Soj.